The chain runs to 512 residues: uncharacterized protein (512 aa).

2 helical membrane passes run 20–40 and 222–242; these read IFPV…IYIW and GIAL…FGYI. In terms of domain architecture, Histidine kinase spans 297–512; the sequence is EQLIQSIEQT…TLMCYQIPLV (216 aa). Histidine 325 carries the phosphohistidine; by autocatalysis modification.

Autophosphorylated.

The protein resides in the cell membrane. It carries out the reaction ATP + protein L-histidine = ADP + protein N-phospho-L-histidine.. In terms of biological role, probable member of the two-component regulatory system SE_0166/SE_0165. May activate SE_0165 by phosphorylation. This is an uncharacterized protein from Staphylococcus epidermidis (strain ATCC 12228 / FDA PCI 1200).